The sequence spans 144 residues: MESPLGSDLARLVRVWRALIDHRLKPLELTQTHWVTLHNIHQLPPEQSQIQLAKAIGIEQPSLVRTLDQLEEKGLISRQTCSSDRRAKRIKLTEKAEPLINEMEEVIGKTRDEILSGVSKQEVETLLHLIRKLEQNILDLQAKD.

The HTH marR-type domain occupies 2 to 135 (ESPLGSDLAR…LLHLIRKLEQ (134 aa)). The segment at residues 49-72 (QIQLAKAIGIEQPSLVRTLDQLEE) is a DNA-binding region (H-T-H motif).

The protein belongs to the SlyA family. As to quaternary structure, homodimer.

In terms of biological role, transcription regulator that can specifically activate or repress expression of target genes. This Klebsiella pneumoniae (strain 342) protein is Transcriptional regulator SlyA.